Consider the following 353-residue polypeptide: Methylthioribose-1-phosphate isomerase (353 aa).

Residues 51-53 (RGA), Arg-94, and Gln-203 contribute to the substrate site. The active-site Proton donor is Asp-244. 254 to 255 (NK) is a substrate binding site.

Belongs to the eIF-2B alpha/beta/delta subunits family. MtnA subfamily.

The enzyme catalyses 5-(methylsulfanyl)-alpha-D-ribose 1-phosphate = 5-(methylsulfanyl)-D-ribulose 1-phosphate. Its pathway is amino-acid biosynthesis; L-methionine biosynthesis via salvage pathway; L-methionine from S-methyl-5-thio-alpha-D-ribose 1-phosphate: step 1/6. In terms of biological role, catalyzes the interconversion of methylthioribose-1-phosphate (MTR-1-P) into methylthioribulose-1-phosphate (MTRu-1-P). This is Methylthioribose-1-phosphate isomerase from Trichodesmium erythraeum (strain IMS101).